The primary structure comprises 380 residues: Deoxyguanosinetriphosphate triphosphohydrolase-like protein (380 aa).

Positions 79 to 196 constitute an HD domain; that stretch reads RLTHTLEVQQ…VDAADALAYT (118 aa).

This sequence belongs to the dGTPase family. Type 2 subfamily.

This is Deoxyguanosinetriphosphate triphosphohydrolase-like protein from Deinococcus deserti (strain DSM 17065 / CIP 109153 / LMG 22923 / VCD115).